The chain runs to 102 residues: Complement inhibitor RaCI6 (102 aa).

The signal sequence occupies residues 1 to 24; sequence MAALNGLVLLLLTISAMFISECYS. Disulfide bonds link Cys-37-Cys-61 and Cys-42-Cys-63.

The protein belongs to the RaCI family. Expressed in salivary glands.

The protein localises to the secreted. Complement inhibitor. Prevents complement-mediated C5 activation by binding to C5. Binds C5 at a different binding site than the other tick complement inhibitors OmCI and CirpT1, and the drug eculizumab. The protein is Complement inhibitor RaCI6 of Dermacentor andersoni (Rocky mountain wood tick).